A 1012-amino-acid chain; its full sequence is AP-2 complex subunit alpha-1 (1012 aa).

4 HEAT repeats span residues Ala254–Asn289, Asp354–Ala391, Asp393–Trp430, and Pro525–Val565. A disordered region spans residues Ser652 to Ser678. The segment covering Ser663–Gln675 has biased composition (polar residues). One can recognise a GAE domain in the interval Ala742 to Asn841.

Belongs to the adaptor complexes large subunit family. As to quaternary structure, adaptor protein complex 2 (AP-2) is a heterotetramer composed of two large adaptins (alpha-type and beta-type subunits), a medium adaptin (mu-type subunit) and a small adaptin (sigma-type subunit). Binds to EPSIN2.

Its subcellular location is the membrane. The protein resides in the coated pit. Subunit of the adaptor protein complex 2 (AP-2). Adaptor protein complexes function in protein transport via transport vesicles in different membrane traffic pathways. Adaptor protein complexes are vesicle coat components and appear to be involved in cargo selection and vesicle formation. AP-2 is involved in clathrin-dependent endocytosis in which cargo proteins are incorporated into vesicles surrounded by clathrin (clathrin-coated vesicles, CCVs) which are destined for fusion with the early endosome. The complex binds polyphosphoinositides. The protein is AP-2 complex subunit alpha-1 (ALPHA-ADR) of Arabidopsis thaliana (Mouse-ear cress).